Consider the following 102-residue polypeptide: Small ribosomal subunit protein uS10 (102 aa).

The protein belongs to the universal ribosomal protein uS10 family. In terms of assembly, part of the 30S ribosomal subunit.

Functionally, involved in the binding of tRNA to the ribosomes. This chain is Small ribosomal subunit protein uS10, found in Latilactobacillus sakei subsp. sakei (strain 23K) (Lactobacillus sakei subsp. sakei).